The primary structure comprises 72 residues: Large ribosomal subunit protein uL29 (72 aa).

The protein belongs to the universal ribosomal protein uL29 family.

The sequence is that of Large ribosomal subunit protein uL29 from Thermodesulfovibrio yellowstonii (strain ATCC 51303 / DSM 11347 / YP87).